The primary structure comprises 473 residues: MIRAFLVFPYLYILVQSNGYTGGIMVQLNDYILNHIAKTPLILSRYNKEKKRFDYDILKEKVDKYIENDKKELILLYGLRGLGKTTLLSQIYHYARLKIEPNRVLYFSMDELKLNDIKLMDALKAYSEIFGINLYEEKIILLLDEIQYERHWDLVLKNLYDTTNIFIIATGSSALKLRESPDLARRALHKPIYPMTFREYLYLTKNIKIESLFEEVILNNNLDNFKKVYAKVYSQILEEDVKKYLRIGSLPFALEDDELEVYNKIYTMLERIIYKDVREVKEFDMETLDKAFKLLYLLANPKGERYSYESLANTLEIAKGTLINLVDVLEKCELLFKIYPYGSMDKKVRKSQKIKFLPVPIKTALWHKMGVVIDDVCYGSLLEDVVAFYLYLFCKKKGYSLSYEPKKGGADFILISPYMEKIVIEVGLGKKSSKQVLKSMERVKASKGIIIGDELKVEGNILYIPWKGFLLLI.

A signal peptide spans 1 to 19; that stretch reads MIRAFLVFPYLYILVQSNG.

This is an uncharacterized protein from Methanocaldococcus jannaschii (strain ATCC 43067 / DSM 2661 / JAL-1 / JCM 10045 / NBRC 100440) (Methanococcus jannaschii).